A 201-amino-acid polypeptide reads, in one-letter code: NADH-quinone oxidoreductase subunit C (201 aa).

It belongs to the complex I 30 kDa subunit family. In terms of assembly, NDH-1 is composed of 14 different subunits. Subunits NuoB, C, D, E, F, and G constitute the peripheral sector of the complex.

The protein resides in the cell inner membrane. The catalysed reaction is a quinone + NADH + 5 H(+)(in) = a quinol + NAD(+) + 4 H(+)(out). Functionally, NDH-1 shuttles electrons from NADH, via FMN and iron-sulfur (Fe-S) centers, to quinones in the respiratory chain. The immediate electron acceptor for the enzyme in this species is believed to be ubiquinone. Couples the redox reaction to proton translocation (for every two electrons transferred, four hydrogen ions are translocated across the cytoplasmic membrane), and thus conserves the redox energy in a proton gradient. The sequence is that of NADH-quinone oxidoreductase subunit C from Aromatoleum aromaticum (strain DSM 19018 / LMG 30748 / EbN1) (Azoarcus sp. (strain EbN1)).